Here is a 234-residue protein sequence, read N- to C-terminus: MDIKLKDFEGPLDLLLHLVSQYKVDIYEVPIVEVIEQYLNYIETLQVMKLEVAGDYMLMASQLMLIKSRRLLPKVVEHIEEEDLEQDLLEKIEEYSRFKAVSQALAKQHDQRAKWYSKPKQELIFEDAILQEDKTVMDLFLAFSNIMAAKRAVLKNNHTVIERDDYKIEDMMASIKQRLEKENVISLSAIFEECQTLNEVISIFLASLELIKLHVVFVEQLSNFGAIILRKEKK.

This sequence belongs to the ScpA family. As to quaternary structure, component of a cohesin-like complex composed of ScpA, ScpB and the Smc homodimer, in which ScpA and ScpB bind to the head domain of Smc. The presence of the three proteins is required for the association of the complex with DNA.

It is found in the cytoplasm. Participates in chromosomal partition during cell division. May act via the formation of a condensin-like complex containing Smc and ScpB that pull DNA away from mid-cell into both cell halves. This chain is Segregation and condensation protein A, found in Streptococcus pyogenes serotype M3 (strain ATCC BAA-595 / MGAS315).